The chain runs to 283 residues: Phosphatidylglycerol--prolipoprotein diacylglyceryl transferase (283 aa).

Helical transmembrane passes span 17-37, 56-76, 92-112, and 117-137; these read LAVR…TFLG, FLTW…VLFY, WEGG…IWLF, and GIGF…GLAS. An a 1,2-diacyl-sn-glycero-3-phospho-(1'-sn-glycerol)-binding site is contributed by R139. 3 helical membrane-spanning segments follow: residues 194 to 214, 222 to 242, and 255 to 275; these read PSQL…VWLF, GQVA…AEFA, and GLSM…VGFV.

The protein belongs to the Lgt family.

The protein resides in the cell inner membrane. The enzyme catalyses L-cysteinyl-[prolipoprotein] + a 1,2-diacyl-sn-glycero-3-phospho-(1'-sn-glycerol) = an S-1,2-diacyl-sn-glyceryl-L-cysteinyl-[prolipoprotein] + sn-glycerol 1-phosphate + H(+). It participates in protein modification; lipoprotein biosynthesis (diacylglyceryl transfer). Its function is as follows. Catalyzes the transfer of the diacylglyceryl group from phosphatidylglycerol to the sulfhydryl group of the N-terminal cysteine of a prolipoprotein, the first step in the formation of mature lipoproteins. This chain is Phosphatidylglycerol--prolipoprotein diacylglyceryl transferase, found in Neisseria meningitidis serogroup A / serotype 4A (strain DSM 15465 / Z2491).